The primary structure comprises 1441 residues: uncharacterized protein (1441 aa).

Disordered stretches follow at residues M1–S95, N150–F204, K224–E289, H401–Q477, R529–Q661, L680–T760, R776–Q810, Q849–L899, R980–N1118, K1161–N1185, N1209–Y1321, G1348–F1402, and L1421–E1441. Positions N19–N38 are enriched in low complexity. The span at Q39 to M56 shows a compositional bias: polar residues. Composition is skewed to low complexity over residues S57–N91, I153–P187, Q227–N283, N416–N445, G555–N564, and N572–T635. A compositionally biased stretch (polar residues) spans A636–S645. Low complexity-rich tracts occupy residues Q648–Q661 and L680–N700. Residues S703 to K720 are compositionally biased toward basic and acidic residues. A compositionally biased stretch (polar residues) spans E729–S751. Low complexity-rich tracts occupy residues D780–Q810 and Q849–S880. The span at I881–V892 shows a compositional bias: gly residues. The span at G981 to P994 shows a compositional bias: polar residues. Residues N995–N1067 are compositionally biased toward low complexity. Polar residues predominate over residues D1068 to G1087. Over residues S1088–N1118 the composition is skewed to low complexity. Low complexity-rich tracts occupy residues D1225–N1249 and N1257–E1291. Basic and acidic residues predominate over residues R1362–D1373.

This is an uncharacterized protein from Dictyostelium discoideum (Social amoeba).